We begin with the raw amino-acid sequence, 107 residues long: Prostate collagen triple helix protein (107 aa).

Residues 47-107 form a disordered region; the sequence is PLIPRTPGSP…PTSPLFPFCP (61 aa). Over residues 81 to 100 the composition is skewed to low complexity; that stretch reads VGPKGPMLPLGPSGPVGPTS.

As to expression, expressed in prostate and testis. Weakly or not expressed in other tissues. Overexpressed in prostate cancers.

Its subcellular location is the cytoplasm. Its function is as follows. May be involved in growth and survival of prostate cancer cells through the TAF-Ibeta pathway. The chain is Prostate collagen triple helix protein (PCOTH) from Homo sapiens (Human).